The sequence spans 459 residues: UDP-N-acetylmuramoylalanine--D-glutamate ligase (459 aa).

119–125 (GTNGKTT) provides a ligand contact to ATP.

Belongs to the MurCDEF family.

It is found in the cytoplasm. It catalyses the reaction UDP-N-acetyl-alpha-D-muramoyl-L-alanine + D-glutamate + ATP = UDP-N-acetyl-alpha-D-muramoyl-L-alanyl-D-glutamate + ADP + phosphate + H(+). It participates in cell wall biogenesis; peptidoglycan biosynthesis. Cell wall formation. Catalyzes the addition of glutamate to the nucleotide precursor UDP-N-acetylmuramoyl-L-alanine (UMA). In Lacticaseibacillus paracasei (strain ATCC 334 / BCRC 17002 / CCUG 31169 / CIP 107868 / KCTC 3260 / NRRL B-441) (Lactobacillus paracasei), this protein is UDP-N-acetylmuramoylalanine--D-glutamate ligase.